A 116-amino-acid chain; its full sequence is Protein Rev (116 aa).

Phosphoserine; by host CK2 occurs at positions 5 and 8. The segment at cysteine 18–asparagine 26 is homomultimerization. Residues proline 27–alanine 47 are disordered. The Nuclear localization signal and RNA-binding (RRE) signature appears at threonine 34–arginine 50. Positions glutamine 36 to alanine 47 are enriched in basic residues. Residues leucine 73–asparagine 84 carry the Nuclear export signal and binding to XPO1 motif. Residues glutamate 87–glutamate 116 are disordered. The residue at position 99 (serine 99) is a Phosphoserine; by host.

This sequence belongs to the HIV-1 REV protein family. In terms of assembly, homomultimer; when bound to the RRE. Multimeric assembly is essential for activity and may involve XPO1. Binds to human KPNB1, XPO1, TNPO1, RANBP5 and IPO7. Interacts with the viral Integrase. Interacts with human KHDRBS1. Interacts with human NAP1; this interaction decreases Rev multimerization and stimulates its activity. Interacts with human DEAD-box helicases DDX3 and DDX24; these interactions may serve for viral RNA export to the cytoplasm and packaging, respectively. Interacts with human PSIP1; this interaction may inhibit HIV-1 DNA integration by promoting dissociation of the Integrase-LEDGF/p75 complex. Post-translationally, asymmetrically arginine dimethylated at one site by host PRMT6. Methylation impairs the RNA-binding activity and export of viral RNA from the nucleus to the cytoplasm. In terms of processing, phosphorylated by protein kinase CK2. Presence of, and maybe binding to the N-terminus of the regulatory beta subunit of CK2 is necessary for CK2-mediated Rev's phosphorylation.

Its subcellular location is the host nucleus. The protein resides in the host nucleolus. The protein localises to the host cytoplasm. Its function is as follows. Escorts unspliced or incompletely spliced viral pre-mRNAs (late transcripts) out of the nucleus of infected cells. These pre-mRNAs carry a recognition sequence called Rev responsive element (RRE) located in the env gene, that is not present in fully spliced viral mRNAs (early transcripts). This function is essential since most viral proteins are translated from unspliced or partially spliced pre-mRNAs which cannot exit the nucleus by the pathway used by fully processed cellular mRNAs. Rev itself is translated from a fully spliced mRNA that readily exits the nucleus. Rev's nuclear localization signal (NLS) binds directly to KPNB1/Importin beta-1 without previous binding to KPNA1/Importin alpha-1. KPNB1 binds to the GDP bound form of RAN (Ran-GDP) and targets Rev to the nucleus. In the nucleus, the conversion from Ran-GDP to Ran-GTP dissociates Rev from KPNB1 and allows Rev's binding to the RRE in viral pre-mRNAs. Rev multimerization on the RRE via cooperative assembly exposes its nuclear export signal (NES) to the surface. Rev can then form a complex with XPO1/CRM1 and Ran-GTP, leading to nuclear export of the complex. Conversion from Ran-GTP to Ran-GDP mediates dissociation of the Rev/RRE/XPO1/RAN complex, so that Rev can return to the nucleus for a subsequent round of export. Beside KPNB1, also seems to interact with TNPO1/Transportin-1, RANBP5/IPO5 and IPO7/RANBP7 for nuclear import. The nucleoporin-like HRB/RIP is an essential cofactor that probably indirectly interacts with Rev to release HIV RNAs from the perinuclear region to the cytoplasm. The polypeptide is Protein Rev (Human immunodeficiency virus type 1 group M subtype F1 (isolate VI850) (HIV-1)).